The primary structure comprises 205 residues: tRNA (pseudouridine(54)-N(1))-methyltransferase (205 aa).

S-adenosyl-L-methionine is bound by residues leucine 136, glycine 156, 179 to 184 (LSPLEL), and cysteine 189.

Belongs to the methyltransferase superfamily. TrmY family. As to quaternary structure, homodimer.

The protein localises to the cytoplasm. The catalysed reaction is pseudouridine(54) in tRNA + S-adenosyl-L-methionine = N(1)-methylpseudouridine(54) in tRNA + S-adenosyl-L-homocysteine + H(+). In terms of biological role, specifically catalyzes the N1-methylation of pseudouridine at position 54 (Psi54) in tRNAs. In Methanocaldococcus jannaschii (strain ATCC 43067 / DSM 2661 / JAL-1 / JCM 10045 / NBRC 100440) (Methanococcus jannaschii), this protein is tRNA (pseudouridine(54)-N(1))-methyltransferase.